The sequence spans 380 residues: Apelin receptor (380 aa).

Topologically, residues 1–30 (MEEGGDFDNYYGADNQSECEYTDWKSSGAL) are extracellular. Asparagine 15 carries N-linked (GlcNAc...) asparagine glycosylation. 2 disulfides stabilise this stretch: cysteine 19/cysteine 281 and cysteine 102/cysteine 181. The chain crosses the membrane as a helical span at residues 31–54 (IPAIYMLVFLLGTTGNGLVLWTVF). Over 55-64 (RSSREKRRSA) the chain is Cytoplasmic. Residues 65 to 86 (DIFIASLAVADLTFVVTLPLWA) form a helical membrane-spanning segment. Residues 87–99 (TYTYRDYDWPFGT) lie on the Extracellular side of the membrane. A helical transmembrane segment spans residues 100–125 (FSCKLSSYLIFVNMYASVFCLTGLSF). Residues 126 to 146 (DRYLAIVRPVANARLRLRVSG) lie on the Cytoplasmic side of the membrane. The helical transmembrane segment at 147-164 (AVATAVLWVLAALLAMPV) threads the bilayer. Residues 165-198 (MVFRTTGDLENTTKVQCYMDYSMVATVSSDWAWE) are Extracellular-facing. N-linked (GlcNAc...) asparagine glycosylation is present at asparagine 175. Residues 199 to 223 (VGLGVSSTTVGFVVPFTIMLTCYFF) form a helical membrane-spanning segment. Residues 224–246 (IAQTIAGHFRKERIEGLRKRRRL) are Cytoplasmic-facing. Residues 247-270 (LSIIVVLVVTFALCWMPYHLVKTL) form a helical membrane-spanning segment. Residues 271–289 (YMLGSLLHWPCDFDLFLMN) are Extracellular-facing. Residues 290–312 (VFPYCTCISYVNSCLNPFLYAFF) traverse the membrane as a helical segment. Topologically, residues 313–380 (DPRFRQACTS…PYSQETLVVD (68 aa)) are cytoplasmic. The span at 342–351 (KSASYSSGHS) shows a compositional bias: low complexity. Residues 342–380 (KSASYSSGHSQGPGPNMGKGGEQMHEKSIPYSQETLVVD) are disordered. The span at 371–380 (PYSQETLVVD) shows a compositional bias: polar residues.

It belongs to the G-protein coupled receptor 1 family. Homodimer; dimerization inhibits APLNR-mediated G protein and beta-arrestin signaling pathways compared to monomeric APLNR.

The protein resides in the cell membrane. Its function is as follows. G protein-coupled receptor for peptide hormones apelin (APLN) and apelin receptor early endogenous ligand (APELA/ELA), that plays a role in the regulation of normal cardiovascular function and fluid homeostasis. When acting as apelin receptor, activates both G(i) protein pathway that inhibits adenylate cyclase activity, and the beta-arrestin pathway that promotes internalization of the receptor. APLNR/APJ also functions as mechanoreceptor that is activated by pathological stimuli in a G-protein-independent fashion to induce beta-arrestin signaling, hence eliciting cardiac hypertrophy. However, the presence of apelin ligand blunts cardiac hypertrophic induction from APLNR/APJ on response to pathological stimuli. Plays a key role in early development such as gastrulation, blood vessels formation and heart morphogenesis by acting as a APELA receptor. May promote angioblast migration toward the embryonic midline, i.e. the position of the future vessel formation, during vasculogenesis. Promotes sinus venosus (SV)-derived endothelial cells migration into the developing heart to promote coronary blood vessel development. Also plays a role in various processes in adults such as regulation of blood vessel formation, blood pressure, heart contractility and heart failure. Functionally, (Microbial infection) Alternative coreceptor with CD4 for HIV-1 infection; may be involved in the development of AIDS dementia. The protein is Apelin receptor (APLNR) of Macaca mulatta (Rhesus macaque).